We begin with the raw amino-acid sequence, 348 residues long: Phenylalanine--tRNA ligase alpha subunit (348 aa).

Glutamate 259 lines the Mg(2+) pocket.

The protein belongs to the class-II aminoacyl-tRNA synthetase family. Phe-tRNA synthetase alpha subunit type 1 subfamily. As to quaternary structure, tetramer of two alpha and two beta subunits. Mg(2+) serves as cofactor.

It localises to the cytoplasm. It catalyses the reaction tRNA(Phe) + L-phenylalanine + ATP = L-phenylalanyl-tRNA(Phe) + AMP + diphosphate + H(+). In Lacticaseibacillus paracasei (strain ATCC 334 / BCRC 17002 / CCUG 31169 / CIP 107868 / KCTC 3260 / NRRL B-441) (Lactobacillus paracasei), this protein is Phenylalanine--tRNA ligase alpha subunit.